The sequence spans 349 residues: Anthranilate phosphoribosyltransferase (349 aa).

5-phospho-alpha-D-ribose 1-diphosphate-binding positions include glycine 82, 85 to 86, 92 to 95, 110 to 118, and serine 122; these read GD, NVSS, and KHGNRAVSG. Glycine 82 provides a ligand contact to anthranilate. Serine 94 serves as a coordination point for Mg(2+). Asparagine 113 contributes to the anthranilate binding site. Arginine 168 provides a ligand contact to anthranilate. Residues aspartate 227 and glutamate 228 each coordinate Mg(2+).

Belongs to the anthranilate phosphoribosyltransferase family. In terms of assembly, homodimer. Mg(2+) is required as a cofactor.

It catalyses the reaction N-(5-phospho-beta-D-ribosyl)anthranilate + diphosphate = 5-phospho-alpha-D-ribose 1-diphosphate + anthranilate. It functions in the pathway amino-acid biosynthesis; L-tryptophan biosynthesis; L-tryptophan from chorismate: step 2/5. In terms of biological role, catalyzes the transfer of the phosphoribosyl group of 5-phosphorylribose-1-pyrophosphate (PRPP) to anthranilate to yield N-(5'-phosphoribosyl)-anthranilate (PRA). The sequence is that of Anthranilate phosphoribosyltransferase from Pseudomonas paraeruginosa (strain DSM 24068 / PA7) (Pseudomonas aeruginosa (strain PA7)).